The chain runs to 473 residues: Dolichyl-diphosphooligosaccharide--protein glycosyltransferase subunit 1B (473 aa).

Positions 1-27 (MAPSLSTAVSSLLLLLLLAAAISVSSS) are cleaved as a signal peptide. Over 28–439 (PPMPEDSIRV…PFQVYYEFNP (412 aa)) the chain is Lumenal. N-linked (GlcNAc...) asparagine glycosylation is found at Asn-307 and Asn-361. A helical membrane pass occupies residues 440–460 (IFMLAEPLMLISAVFLFFVAC). Topologically, residues 461 to 473 (IAYLHMDLSIGKS) are cytoplasmic.

The protein belongs to the OST1 family. In terms of assembly, component of the oligosaccharyltransferase (OST) complex.

It is found in the endoplasmic reticulum membrane. Its pathway is protein modification; protein glycosylation. Subunit of the oligosaccharyl transferase (OST) complex that catalyzes the initial transfer of a defined glycan (Glc(3)Man(9)GlcNAc(2) in eukaryotes) from the lipid carrier dolichol-pyrophosphate to an asparagine residue within an Asn-X-Ser/Thr consensus motif in nascent polypeptide chains, the first step in protein N-glycosylation. N-glycosylation occurs cotranslationally and the complex associates with the Sec61 complex at the channel-forming translocon complex that mediates protein translocation across the endoplasmic reticulum (ER). All subunits are required for a maximal enzyme activity. In Oryza sativa subsp. japonica (Rice), this protein is Dolichyl-diphosphooligosaccharide--protein glycosyltransferase subunit 1B (OST1B).